Here is a 122-residue protein sequence, read N- to C-terminus: Large ribosomal subunit protein uL18 (122 aa).

The span at 1–20 shows a compositional bias: basic residues; it reads MLKKVSKNTNRQGRHQRVRN. The interval 1-22 is disordered; the sequence is MLKKVSKNTNRQGRHQRVRNKI.

The protein belongs to the universal ribosomal protein uL18 family. In terms of assembly, part of the 50S ribosomal subunit; part of the 5S rRNA/L5/L18/L25 subcomplex. Contacts the 5S and 23S rRNAs.

In terms of biological role, this is one of the proteins that bind and probably mediate the attachment of the 5S RNA into the large ribosomal subunit, where it forms part of the central protuberance. The chain is Large ribosomal subunit protein uL18 from Alkaliphilus metalliredigens (strain QYMF).